Reading from the N-terminus, the 277-residue chain is Phosphoenolpyruvate synthase regulatory protein (277 aa).

157 to 164 (GVSRCGKT) is a binding site for ADP.

Belongs to the pyruvate, phosphate/water dikinase regulatory protein family. PSRP subfamily.

The enzyme catalyses [pyruvate, water dikinase] + ADP = [pyruvate, water dikinase]-phosphate + AMP + H(+). It catalyses the reaction [pyruvate, water dikinase]-phosphate + phosphate + H(+) = [pyruvate, water dikinase] + diphosphate. Bifunctional serine/threonine kinase and phosphorylase involved in the regulation of the phosphoenolpyruvate synthase (PEPS) by catalyzing its phosphorylation/dephosphorylation. This is Phosphoenolpyruvate synthase regulatory protein from Salmonella gallinarum (strain 287/91 / NCTC 13346).